Here is a 187-residue protein sequence, read N- to C-terminus: Peptide deformylase (187 aa).

Fe cation contacts are provided by C94 and H136. Residue E137 is part of the active site. Residue H140 coordinates Fe cation.

This sequence belongs to the polypeptide deformylase family. Fe(2+) is required as a cofactor.

It carries out the reaction N-terminal N-formyl-L-methionyl-[peptide] + H2O = N-terminal L-methionyl-[peptide] + formate. Removes the formyl group from the N-terminal Met of newly synthesized proteins. Requires at least a dipeptide for an efficient rate of reaction. N-terminal L-methionine is a prerequisite for activity but the enzyme has broad specificity at other positions. In Chlorobaculum parvum (strain DSM 263 / NCIMB 8327) (Chlorobium vibrioforme subsp. thiosulfatophilum), this protein is Peptide deformylase.